A 252-amino-acid chain; its full sequence is 5-oxoprolinase subunit A (252 aa).

This sequence belongs to the LamB/PxpA family. As to quaternary structure, forms a complex composed of PxpA, PxpB and PxpC.

The catalysed reaction is 5-oxo-L-proline + ATP + 2 H2O = L-glutamate + ADP + phosphate + H(+). Its function is as follows. Catalyzes the cleavage of 5-oxoproline to form L-glutamate coupled to the hydrolysis of ATP to ADP and inorganic phosphate. The chain is 5-oxoprolinase subunit A from Mycolicibacterium paratuberculosis (strain ATCC BAA-968 / K-10) (Mycobacterium paratuberculosis).